Consider the following 630-residue polypeptide: 1-deoxy-D-xylulose-5-phosphate synthase (630 aa).

Residues H73 and 114-116 each bind thiamine diphosphate; that span reads SHA. D146 contributes to the Mg(2+) binding site. Thiamine diphosphate contacts are provided by residues 147–148, N176, F287, and E371; that span reads GA. A Mg(2+)-binding site is contributed by N176.

The protein belongs to the transketolase family. DXPS subfamily. In terms of assembly, homodimer. Mg(2+) serves as cofactor. Requires thiamine diphosphate as cofactor.

It carries out the reaction D-glyceraldehyde 3-phosphate + pyruvate + H(+) = 1-deoxy-D-xylulose 5-phosphate + CO2. Its pathway is metabolic intermediate biosynthesis; 1-deoxy-D-xylulose 5-phosphate biosynthesis; 1-deoxy-D-xylulose 5-phosphate from D-glyceraldehyde 3-phosphate and pyruvate: step 1/1. Catalyzes the acyloin condensation reaction between C atoms 2 and 3 of pyruvate and glyceraldehyde 3-phosphate to yield 1-deoxy-D-xylulose-5-phosphate (DXP). This is 1-deoxy-D-xylulose-5-phosphate synthase from Corynebacterium jeikeium (strain K411).